A 125-amino-acid polypeptide reads, in one-letter code: SOSS complex subunit C homolog (125 aa).

The tract at residues 43–77 is disordered; it reads MPSPQLLGQPTVAPEFLPQGVGLPTNATPPRSAFN. Over residues 67-77 the composition is skewed to polar residues; that stretch reads TNATPPRSAFN.

This sequence belongs to the SOSS-C family.

The polypeptide is SOSS complex subunit C homolog (Drosophila persimilis (Fruit fly)).